The following is a 293-amino-acid chain: Heterogeneous nuclear ribonucleoprotein C-like 1 (293 aa).

The RRM domain occupies 16–87; sequence SRVFIGNLNT…QVVDINLAAE (72 aa). Disordered stretches follow at residues 137–177 and 206–293; these read ALAV…KLKG and KEQS…QDDS. Residues 177–225 are a coiled coil; the sequence is GDDLQAIKQELTQIKQKVDSLLENLEKIEKEQSKQEVEVKNAKSEEEQS. 2 stretches are compositionally biased toward basic and acidic residues: residues 206 to 222 and 229 to 240; these read KEQS…KSEE and MKKDETHVKMES. Acidic residues-rich tracts occupy residues 242-267 and 275-284; these read GGAE…DDQL and KEAEEGEDDR.

It belongs to the RRM HNRPC family. RALY subfamily.

It localises to the nucleus. Functionally, may play a role in nucleosome assembly by neutralizing basic proteins such as A and B core hnRNPs. This Homo sapiens (Human) protein is Heterogeneous nuclear ribonucleoprotein C-like 1 (HNRNPCL1).